Here is a 199-residue protein sequence, read N- to C-terminus: GTP cyclohydrolase 1 (199 aa).

The Zn(2+) site is built by C89, H92, and C161.

Belongs to the GTP cyclohydrolase I family. As to quaternary structure, homomer.

The enzyme catalyses GTP + H2O = 7,8-dihydroneopterin 3'-triphosphate + formate + H(+). It functions in the pathway cofactor biosynthesis; 7,8-dihydroneopterin triphosphate biosynthesis; 7,8-dihydroneopterin triphosphate from GTP: step 1/1. This chain is GTP cyclohydrolase 1, found in Bifidobacterium longum (strain DJO10A).